A 326-amino-acid chain; its full sequence is Glycolipid sulfotransferase MRA_1383 (326 aa).

Residue 40 to 45 (KSGLTW) coordinates 3'-phosphoadenylyl sulfate. H97 functions as the Proton acceptor in the catalytic mechanism. 116–124 (RDPRDAAVS) is a 3'-phosphoadenylyl sulfate binding site.

Belongs to the sulfotransferase 1 family.

Its function is as follows. Involved in the synthesis of cell wall sulfolipids. The chain is Glycolipid sulfotransferase MRA_1383 from Mycobacterium tuberculosis (strain ATCC 25177 / H37Ra).